Reading from the N-terminus, the 217-residue chain is Probable GTP-binding protein EngB (217 aa).

Positions 29–213 (GPLEVAFAGR…RQAIGETVGV (185 aa)) constitute an EngB-type G domain. GTP contacts are provided by residues 37–44 (GRSNVGKS), 64–68 (GRTQE), 91–94 (DMPG), 158–161 (TKTD), and 192–194 (TSS). Ser44 and Thr66 together coordinate Mg(2+).

This sequence belongs to the TRAFAC class TrmE-Era-EngA-EngB-Septin-like GTPase superfamily. EngB GTPase family. Requires Mg(2+) as cofactor.

In terms of biological role, necessary for normal cell division and for the maintenance of normal septation. This Rhizobium leguminosarum bv. trifolii (strain WSM2304) protein is Probable GTP-binding protein EngB.